Here is a 477-residue protein sequence, read N- to C-terminus: Zinc finger C3HC-type protein 1-like (477 aa).

The segment at 95–149 adopts a C3HC-type zinc-finger fold; the sequence is CAKYGWCNIECDMLKCSSCNAYLCASLQPILDFSKYKQRCVELQEALRKAHEKFC. The tract at residues 287 to 392 is disordered; the sequence is SLSAPGTPVS…SSSSDTSPRS (106 aa). Residues 354-363 show a composition bias toward polar residues; the sequence is SMGQGENTGL. Residues 370–379 show a composition bias toward basic residues; the sequence is SPHRRAKRPR. Residues 382 to 392 are compositionally biased toward low complexity; it reads SSSSSDTSPRS.

In terms of processing, phosphorylated. May also be weakly phosphorylated on Tyr residues.

It localises to the nucleus. It is found in the nucleus envelope. In terms of biological role, required for proper positioning of a substantial amount of TPR at the nuclear basket (NB) through interaction with TPR. The protein is Zinc finger C3HC-type protein 1-like (zc3hc1) of Xenopus laevis (African clawed frog).